Here is a 1041-residue protein sequence, read N- to C-terminus: Histone deacetylase complex subunit SAP130-B (1041 aa).

5 disordered regions span residues 1 to 62 (MSSQ…QEPV), 111 to 131 (KSTM…SAVP), 572 to 592 (TNQG…EPKS), 614 to 769 (TPAG…PSGA), and 806 to 852 (VLAN…DEER). Polar residues predominate over residues 18 to 30 (VSNSGASVGQNVQ). A compositionally biased stretch (basic and acidic residues) spans 33 to 42 (EVAREIDVQS). The span at 576–592 (VQTSSVSSQQASSEPKS) shows a compositional bias: low complexity. The span at 614–641 (TPAGTTVMQSHSQSPGIGSSPAQGSSPR) shows a compositional bias: polar residues. The segment covering 707-728 (PGAADQPSAAASLPSSHHPTAA) has biased composition (low complexity).

This sequence belongs to the SAP130 family.

The protein localises to the nucleus. Acts as a transcriptional repressor. The polypeptide is Histone deacetylase complex subunit SAP130-B (sap130-b) (Xenopus laevis (African clawed frog)).